The chain runs to 203 residues: Thymidylate kinase (203 aa).

14–21 (GGEGIGKS) lines the ATP pocket.

The protein belongs to the thymidylate kinase family.

The catalysed reaction is dTMP + ATP = dTDP + ADP. Its function is as follows. Phosphorylation of dTMP to form dTDP in both de novo and salvage pathways of dTTP synthesis. This is Thymidylate kinase from Rickettsia peacockii (strain Rustic).